The primary structure comprises 369 residues: Pulmonary surfactant-associated protein D (369 aa).

Positions 1–20 are cleaved as a signal peptide; the sequence is MLLLPLSVLLLLTQPWRSLG. An S-nitrosocysteine mark is found at C35 and C40. The segment at 41 to 215 is disordered; it reads SPPEDGLPGR…ERGAKGESGL (175 aa). Residues 46–216 enclose the Collagen-like domain; the sequence is GLPGRDGRDG…RGAKGESGLA (171 aa). Residues 47-65 are compositionally biased toward basic and acidic residues; the sequence is LPGRDGRDGREGPRGEKGD. 4-hydroxyproline is present on P78. Position 87 is a 5-hydroxylysine (K87). N90 carries N-linked (GlcNAc...) asparagine glycosylation. P96 is subject to 4-hydroxyproline. The residue at position 99 (K99) is a 5-hydroxylysine. Over residues 139–148 the composition is skewed to gly residues; sequence GPKGGVGAPG. A 4-hydroxyproline mark is found at P165 and P171. Residues 165 to 191 are compositionally biased toward low complexity; it reads PGEPGAPGRAGAPGPAGAIGPQGPSGA. Residues 198–210 show a composition bias toward basic and acidic residues; the sequence is KGDRGTPGERGAK. Residues 217–248 adopt a coiled-coil conformation; sequence EVNALRQRVGILEGQLQRLQNAFSQYKKAMLF. A C-type lectin domain is found at 254–369; the sequence is VGEKIFKTEG…GEQRLVICEF (116 aa). 2 disulfides stabilise this stretch: C275-C367 and C345-C359.

Belongs to the SFTPD family. As to quaternary structure, oligomeric complex of 4 set of homotrimers. Post-translationally, hydroxylation on proline residues within the sequence motif, GXPG, is most likely to be 4-hydroxy as this fits the requirement for 4-hydroxylation in vertebrates. S-nitrosylation at Cys-35 and Cys-40 alters the quaternary structure which results in a pro-inflammatory chemoattractive signaling activity with macrophages.

Its subcellular location is the secreted. It is found in the extracellular space. The protein localises to the extracellular matrix. The protein resides in the surface film. Its function is as follows. Contributes to the lung's defense against inhaled microorganisms, organic antigens and toxins. Interacts with compounds such as bacterial lipopolysaccharides, oligosaccharides and fatty acids and modulates leukocyte action in immune response. May participate in the extracellular reorganization or turnover of pulmonary surfactant. Binds strongly maltose residues and to a lesser extent other alpha-glucosyl moieties. This Bos taurus (Bovine) protein is Pulmonary surfactant-associated protein D (SFTPD).